A 375-amino-acid chain; its full sequence is Queuine tRNA-ribosyltransferase (375 aa).

The active-site Proton acceptor is the aspartate 89. Substrate is bound by residues 89–93, aspartate 143, glutamine 187, and glycine 214; that span reads DSGGF. Residues 245 to 251 form an RNA binding region; sequence GVGKPED. The Nucleophile role is filled by aspartate 264. Residues 269–273 are RNA binding; important for wobble base 34 recognition; sequence TRNAR. Positions 302, 304, 307, and 333 each coordinate Zn(2+).

This sequence belongs to the queuine tRNA-ribosyltransferase family. In terms of assembly, homodimer. Within each dimer, one monomer is responsible for RNA recognition and catalysis, while the other monomer binds to the replacement base PreQ1. Zn(2+) is required as a cofactor.

The catalysed reaction is 7-aminomethyl-7-carbaguanine + guanosine(34) in tRNA = 7-aminomethyl-7-carbaguanosine(34) in tRNA + guanine. Its pathway is tRNA modification; tRNA-queuosine biosynthesis. Functionally, catalyzes the base-exchange of a guanine (G) residue with the queuine precursor 7-aminomethyl-7-deazaguanine (PreQ1) at position 34 (anticodon wobble position) in tRNAs with GU(N) anticodons (tRNA-Asp, -Asn, -His and -Tyr). Catalysis occurs through a double-displacement mechanism. The nucleophile active site attacks the C1' of nucleotide 34 to detach the guanine base from the RNA, forming a covalent enzyme-RNA intermediate. The proton acceptor active site deprotonates the incoming PreQ1, allowing a nucleophilic attack on the C1' of the ribose to form the product. After dissociation, two additional enzymatic reactions on the tRNA convert PreQ1 to queuine (Q), resulting in the hypermodified nucleoside queuosine (7-(((4,5-cis-dihydroxy-2-cyclopenten-1-yl)amino)methyl)-7-deazaguanosine). The chain is Queuine tRNA-ribosyltransferase from Salmonella paratyphi A (strain ATCC 9150 / SARB42).